The following is a 654-amino-acid chain: Macrolide export ATP-binding/permease protein MacB (654 aa).

Residues 6 to 244 (LKVEDLTRRF…EQAAKTPSAS (239 aa)) form the ABC transporter domain. 42-49 (GASGSGKS) lines the ATP pocket. 4 helical membrane-spanning segments follow: residues 280-300 (FLTM…VALG), 529-549 (LLIS…VMNI), 584-604 (LVCL…GFAF), and 619-639 (SIIW…FLPA).

The protein belongs to the ABC transporter superfamily. Macrolide exporter (TC 3.A.1.122) family. As to quaternary structure, homodimer. Part of the tripartite efflux system MacAB-TolC, which is composed of an inner membrane transporter, MacB, a periplasmic membrane fusion protein, MacA, and an outer membrane component, TolC. The complex forms a large protein conduit and can translocate molecules across both the inner and outer membranes. Interacts with MacA.

The protein resides in the cell inner membrane. In terms of biological role, part of the tripartite efflux system MacAB-TolC. MacB is a non-canonical ABC transporter that contains transmembrane domains (TMD), which form a pore in the inner membrane, and an ATP-binding domain (NBD), which is responsible for energy generation. Confers resistance against macrolides. The chain is Macrolide export ATP-binding/permease protein MacB from Vibrio parahaemolyticus serotype O3:K6 (strain RIMD 2210633).